A 359-amino-acid chain; its full sequence is Peptide chain release factor 1 (359 aa).

Glutamine 236 bears the N5-methylglutamine mark.

The protein belongs to the prokaryotic/mitochondrial release factor family. Post-translationally, methylated by PrmC. Methylation increases the termination efficiency of RF1.

Its subcellular location is the cytoplasm. Peptide chain release factor 1 directs the termination of translation in response to the peptide chain termination codons UAG and UAA. The chain is Peptide chain release factor 1 (prfA) from Mycoplasma pneumoniae (strain ATCC 29342 / M129 / Subtype 1) (Mycoplasmoides pneumoniae).